Consider the following 221-residue polypeptide: Small ribosomal subunit protein uS2 (221 aa).

The protein belongs to the universal ribosomal protein uS2 family.

The protein is Small ribosomal subunit protein uS2 of Methanococcus maripaludis (strain C6 / ATCC BAA-1332).